The sequence spans 192 residues: MNAFWIAVAAVSLLGLAFGAILGYASRRFAVEDDPVVEKIDEILPQSQCGQCGYPGCRPYAEAISCNGEKINRCAPGGEAVMLKIAELLNVEPQPLDGEAPELTPARMVAVIDENNCIGCTKCIQACPVDAIVGATRAMHTVMSDLCTGCNLCVDPCPTHCISLQPVAETPDSWKWDLNTIPVRIIPVEHHA.

The hydrophobic stretch occupies residues 1–26 (MNAFWIAVAAVSLLGLAFGAILGYAS). The 4Fe-4S domain maps to 32-91 (EDDPVVEKIDEILPQSQCGQCGYPGCRPYAEAISCNGEKINRCAPGGEAVMLKIAELLNV). Residues C49, C52, C57, C74, C117, C120, C123, C127, C147, C150, C153, and C157 each coordinate [4Fe-4S] cluster. 4Fe-4S ferredoxin-type domains lie at 108–137 (MVAV…GATR) and 138–167 (AMHT…LQPV).

The protein belongs to the 4Fe4S bacterial-type ferredoxin family. RnfB subfamily. As to quaternary structure, the complex is composed of six subunits: RsxA, RsxB, RsxC, RsxD, RsxE and RsxG. [4Fe-4S] cluster is required as a cofactor.

It is found in the cell inner membrane. In terms of biological role, part of a membrane-bound complex that couples electron transfer with translocation of ions across the membrane. Required to maintain the reduced state of SoxR. This Escherichia coli O6:H1 (strain CFT073 / ATCC 700928 / UPEC) protein is Ion-translocating oxidoreductase complex subunit B.